Reading from the N-terminus, the 583-residue chain is Ankyrin repeat and SOCS box protein 15 (583 aa).

11 ANK repeats span residues 75-104 (KGWF…KTLW), 110-139 (DGET…WPNT), 143-172 (KGET…SLDQ), 176-205 (KRWS…NVHL), 209-238 (FGVT…DVFA), 242-271 (DGAS…SGNV), 275-304 (AGHL…KHAI), 307-336 (SGLT…DVNA), 349-378 (ERKT…DPNL), 379-408 (DPLN…NVNC), and 416-444 (TRFP…QVEL). Residues 524–579 (WPEIRQIIENPCSLKHLCRLKIRRVMGLQRLCQPASIQMLPLPAAMRRYLLFKEFD) form the SOCS box domain.

The protein belongs to the ankyrin SOCS box (ASB) family.

Its pathway is protein modification; protein ubiquitination. In terms of biological role, may be a substrate-recognition component of a SCF-like ECS (Elongin-Cullin-SOCS-box protein) E3 ubiquitin-protein ligase complex which mediates the ubiquitination and subsequent proteasomal degradation of target proteins. The polypeptide is Ankyrin repeat and SOCS box protein 15 (Asb15) (Mus musculus (Mouse)).